Reading from the N-terminus, the 726-residue chain is AP-1 complex subunit beta-1 (726 aa).

Belongs to the adaptor complexes large subunit family. As to quaternary structure, adaptor protein complex 1 (AP-1) is a heterotetramer composed of two large adaptins (gamma-type subunit APL4 and beta-type subunit APL2), a medium adaptin (mu-type subunit APM1) and a small adaptin (sigma-type subunit APS1). Interacts with CHC1. Interacts with APM2, probably forming an alternative AP-1-like complex.

Its subcellular location is the cell membrane. It is found in the membrane. It localises to the coated pit. Functionally, adaptins are components of the adaptor complexes which link clathrin to receptors in coated vesicles. Clathrin-associated protein complexes are believed to interact with the cytoplasmic tails of membrane proteins, leading to their selection and concentration. The AP-1 complex interacts directly with clathrin. This is AP-1 complex subunit beta-1 (APL2) from Saccharomyces cerevisiae (strain ATCC 204508 / S288c) (Baker's yeast).